Consider the following 135-residue polypeptide: MKYFVVALALVAAFACIAESKPAESEHELAEVEEENELADLEDAVWLEHLADLSDLEEARGFFGNTWKKIKGKADKIMLKKAVKIMVKKEGISKEEAQAKVDAMSKKQIRLYVLKHYGKKSSSKSFRKIVISKSF.

A signal peptide spans 1–20; it reads MKYFVVALALVAAFACIAES. A propeptide spanning residues 21 to 60 is cleaved from the precursor; sequence KPAESEHELAEVEEENELADLEDAVWLEHLADLSDLEEAR.

Belongs to the cationic peptide 06 (cytoinsectotoxin) family. In terms of tissue distribution, expressed by the venom gland.

It is found in the secreted. Insecticidal, cytolytic and antimicrobial peptide. Forms voltage-dependent, ion-permeable channels in membranes. At high concentration causes cell membrane lysis. This chain is M-zodatoxin-Lt8q (cit 1-16), found in Lachesana tarabaevi (Spider).